The primary structure comprises 60 residues: LICYSQMYNEIIKTCENGETTCYSKTWRDHRGTRLEKGCGCPPVKYDMIVKCCKTDRCGN.

4 disulfide bridges follow: cysteine 3/cysteine 22, cysteine 15/cysteine 39, cysteine 41/cysteine 52, and cysteine 53/cysteine 58.

This sequence belongs to the three-finger toxin family. Short-chain subfamily. Type I alpha-neurotoxin sub-subfamily. Expressed by the venom gland.

The protein resides in the secreted. Produces peripheral paralysis by blocking neuromuscular transmission at the postsynaptic site. Binds to and inhibits the endogenous nicotinic acetylcholine receptors (nAChR) in human rhabdomyosarcoma TE 671 cell line with an IC(50) of 346 mM. This neurotoxin is lethal to mice by intraperitoneal injection and to zebrafish by injection at the back of the dorsolateral region. The sequence is that of Three-finger toxin MS3 from Micrurus surinamensis (Surinam coral snake).